The following is a 124-amino-acid chain: Small ribosomal subunit protein uS12c (124 aa).

2 disordered regions span residues 1–28 and 104–124; these read MPTIQQLVRSERRKINKKTKSPALKSCP and AAGVKDRRKSRSKYGTKKPKS. Basic residues-rich tracts occupy residues 11–20 and 109–124; these read ERRKINKKTK and DRRKSRSKYGTKKPKS.

It belongs to the universal ribosomal protein uS12 family. Part of the 30S ribosomal subunit.

It is found in the plastid. It localises to the chloroplast. Its function is as follows. With S4 and S5 plays an important role in translational accuracy. Located at the interface of the 30S and 50S subunits. The chain is Small ribosomal subunit protein uS12c (rps12) from Porphyra purpurea (Red seaweed).